The sequence spans 558 residues: Urocanate hydratase (558 aa).

Residues 54-55 (GG), Q132, 178-180 (GMG), E198, 244-245 (NA), 265-269 (QTSAH), 275-276 (YL), and Y324 contribute to the NAD(+) site. The active site involves C412. Residue G494 coordinates NAD(+).

This sequence belongs to the urocanase family. Requires NAD(+) as cofactor.

The protein resides in the cytoplasm. The catalysed reaction is 4-imidazolone-5-propanoate = trans-urocanate + H2O. The protein operates within amino-acid degradation; L-histidine degradation into L-glutamate; N-formimidoyl-L-glutamate from L-histidine: step 2/3. In terms of biological role, catalyzes the conversion of urocanate to 4-imidazolone-5-propionate. The sequence is that of Urocanate hydratase from Acinetobacter baumannii (strain AB307-0294).